We begin with the raw amino-acid sequence, 259 residues long: MSENALLALQRHFEDQFGHIEGLQPVSAKPSETAFNSDASEKEQSPTTSNEEEDAISDMEDKEDVSFGSKILRVSHQEVEKPTLSATVGRVSFLKKMPKLEDEEEILAKKREEQKLRKRSRQNDDGSDDDEVENLKNDLELQKLLRESHLLHEATSRTGQVQLVAEGKIRHKVVQQHIAQLGGKKETEKMPMAARRGMKKKQKHIEKVIENEARESGTVLAKKRKERKQFKKGFRPVTFSAPGKLVGGTLLLPKSMIPK.

3 disordered regions span residues 22–68 (GLQP…VSFG), 111–133 (REEQKLRKRSRQNDDGSDDDEVE), and 181–202 (LGGKKETEKMPMAARRGMKKKQ). Residues 50-63 (NEEEDAISDMEDKE) show a composition bias toward acidic residues. S127 is subject to Phosphoserine.

This is an uncharacterized protein from Schizosaccharomyces pombe (strain 972 / ATCC 24843) (Fission yeast).